A 117-amino-acid chain; its full sequence is G antigen 6 (117 aa).

The tract at residues Met1–Cys117 is disordered. Acidic residues-rich tracts occupy residues Phe32 to Glu45 and Glu87 to Glu96. Positions Glu103–Cys117 are enriched in basic and acidic residues.

This sequence belongs to the GAGE family. As to expression, expressed in a variety of tumor tissues but not in normal tissues, except testis.

This Homo sapiens (Human) protein is G antigen 6 (GAGE6).